A 343-amino-acid chain; its full sequence is 4-hydroxy-2-oxovalerate aldolase (343 aa).

The Pyruvate carboxyltransferase domain occupies 4–254; that stretch reads PRLTDTTLRD…NPGLDVFGLM (251 aa). 12 to 13 provides a ligand contact to substrate; that stretch reads RD. A Mn(2+)-binding site is contributed by D13. H16 (proton acceptor) is an active-site residue. Residues S166 and H193 each coordinate substrate. 2 residues coordinate Mn(2+): H193 and H195. Y284 contributes to the substrate binding site.

This sequence belongs to the 4-hydroxy-2-oxovalerate aldolase family.

It carries out the reaction (S)-4-hydroxy-2-oxopentanoate = acetaldehyde + pyruvate. This is 4-hydroxy-2-oxovalerate aldolase from Chloroflexus aggregans (strain MD-66 / DSM 9485).